The chain runs to 267 residues: 27 kDa primary mesenchyme-specific spicule protein (267 aa).

The first 16 residues, 1-16, serve as a signal peptide directing secretion; that stretch reads MKLLAILLVLPALCFG. The interval 20–64 is 11 X 4 AA tandem repeats of G-[PQ]-G-[MQ]; sequence EGPGMGPGMGPGMGPGMGPGMGPGMGPGMGPGMGPGQGQGQGQGQ. 11 consecutive repeat copies span residues 21–24, 25–28, 29–32, 33–36, 37–40, 41–44, 45–48, 49–52, 53–56, 57–60, and 61–64. Residues 44–68 are disordered; that stretch reads MGPGMGPGMGPGQGQGQGQGQGQVG. Positions 79–220 constitute a C-type lectin domain; it reads IGQQCFKMMS…CDEPMYFACS (142 aa). 2 cysteine pairs are disulfide-bonded: cysteine 100–cysteine 219 and cysteine 197–cysteine 211.

As to expression, expressed specifically in the micromere/primary mesenchyme cells (PMC) lineage. Produced uniformly and exclusively by PMCs through the early prism stage and this specificity is further restricted during skeletogenesis to a subpopulation of PMCs associated with the growing tips of the spicules.

It localises to the secreted. May play a role in the regulation or execution of skeletal growth. This chain is 27 kDa primary mesenchyme-specific spicule protein (PM27), found in Strongylocentrotus purpuratus (Purple sea urchin).